A 278-amino-acid polypeptide reads, in one-letter code: Hydroxyethylthiazole kinase (278 aa).

Met48 provides a ligand contact to substrate. Residues Arg124 and Thr175 each coordinate ATP. Gly202 is a binding site for substrate.

The protein belongs to the Thz kinase family. It depends on Mg(2+) as a cofactor.

It carries out the reaction 5-(2-hydroxyethyl)-4-methylthiazole + ATP = 4-methyl-5-(2-phosphooxyethyl)-thiazole + ADP + H(+). The protein operates within cofactor biosynthesis; thiamine diphosphate biosynthesis; 4-methyl-5-(2-phosphoethyl)-thiazole from 5-(2-hydroxyethyl)-4-methylthiazole: step 1/1. Its function is as follows. Catalyzes the phosphorylation of the hydroxyl group of 4-methyl-5-beta-hydroxyethylthiazole (THZ). The polypeptide is Hydroxyethylthiazole kinase (Clostridium botulinum (strain Alaska E43 / Type E3)).